The following is a 310-amino-acid chain: Beta-ketoacyl-[acyl-carrier-protein] synthase III (310 aa).

Residues C116 and H239 contribute to the active site. The segment at 240–244 (QANYR) is ACP-binding. N269 is an active-site residue.

Belongs to the thiolase-like superfamily. FabH family. In terms of assembly, homodimer.

It localises to the cytoplasm. The catalysed reaction is malonyl-[ACP] + acetyl-CoA + H(+) = 3-oxobutanoyl-[ACP] + CO2 + CoA. It functions in the pathway lipid metabolism; fatty acid biosynthesis. In terms of biological role, catalyzes the condensation reaction of fatty acid synthesis by the addition to an acyl acceptor of two carbons from malonyl-ACP. Catalyzes the first condensation reaction which initiates fatty acid synthesis and may therefore play a role in governing the total rate of fatty acid production. Possesses both acetoacetyl-ACP synthase and acetyl transacylase activities. Its substrate specificity determines the biosynthesis of branched-chain and/or straight-chain of fatty acids. The protein is Beta-ketoacyl-[acyl-carrier-protein] synthase III of Acholeplasma laidlawii (strain PG-8A).